A 317-amino-acid polypeptide reads, in one-letter code: Methionyl-tRNA formyltransferase (317 aa).

112–115 (SILP) serves as a coordination point for (6S)-5,6,7,8-tetrahydrofolate.

Belongs to the Fmt family.

The enzyme catalyses L-methionyl-tRNA(fMet) + (6R)-10-formyltetrahydrofolate = N-formyl-L-methionyl-tRNA(fMet) + (6S)-5,6,7,8-tetrahydrofolate + H(+). Its function is as follows. Attaches a formyl group to the free amino group of methionyl-tRNA(fMet). The formyl group appears to play a dual role in the initiator identity of N-formylmethionyl-tRNA by promoting its recognition by IF2 and preventing the misappropriation of this tRNA by the elongation apparatus. The polypeptide is Methionyl-tRNA formyltransferase (Actinobacillus succinogenes (strain ATCC 55618 / DSM 22257 / CCUG 43843 / 130Z)).